The chain runs to 589 residues: Lipoprotein LpqB (589 aa).

The N-terminal stretch at 1-20 (MMRGVLVIMRLLCLGMLFTG) is a signal peptide. Cys-21 carries the N-palmitoyl cysteine lipid modification. Cys-21 carries S-diacylglycerol cysteine lipidation.

Belongs to the LpqB lipoprotein family.

The protein localises to the cell membrane. The chain is Lipoprotein LpqB from Mycobacterium leprae (strain TN).